The chain runs to 648 residues: Replication restart protein PriA (648 aa).

The region spanning 131–297 (TILNESNKPT…EIGKYQLVTL (167 aa)) is the Helicase ATP-binding domain. 144–151 (GVTGSGKT) provides a ligand contact to ATP. The DEAH box signature appears at 240-243 (DEEH). Zn(2+) contacts are provided by Cys-358, Cys-361, Cys-367, Cys-370, Cys-385, Cys-388, Cys-398, and Cys-401. Residues 393-548 (KIFSSCPECL…SFFANELEIR (156 aa)) form the Helicase C-terminal domain.

Belongs to the helicase family. PriA subfamily. Component of the replication restart primosome. Zn(2+) serves as cofactor.

It carries out the reaction Couples ATP hydrolysis with the unwinding of duplex DNA by translocating in the 3'-5' direction.. The enzyme catalyses ATP + H2O = ADP + phosphate + H(+). In terms of biological role, initiates the restart of stalled replication forks, which reloads the replicative helicase on sites other than the origin of replication. Recognizes and binds to abandoned replication forks and remodels them to uncover a helicase loading site. Promotes assembly of the primosome at these replication forks. The polypeptide is Replication restart protein PriA (Rickettsia conorii (strain ATCC VR-613 / Malish 7)).